The following is a 420-amino-acid chain: Deoxyribodipyrimidine photo-lyase (420 aa).

The Photolyase/cryptochrome alpha/beta domain maps to 2-124 (GPLLVWHRGD…PLHLLPAPHL (123 aa)). The disordered stretch occupies residues 147-176 (APPLPPPEALPKGPEEGEIPREDPGLPLPE). Positions 159-170 (GPEEGEIPREDP) are enriched in basic and acidic residues. Tyr-197 contacts FAD. Residue Arg-201 participates in DNA binding. FAD is bound by residues 209–213 (GSRLS), Trp-241, Arg-248, Asn-310, and 341–343 (DGD). Interaction with DNA regions lie at residues 244-251 (ELLWRDFS) and 310-311 (NR). A DNA-binding site is contributed by Gln-373.

It belongs to the DNA photolyase class-1 family. In terms of assembly, monomer. Requires FAD as cofactor.

It carries out the reaction cyclobutadipyrimidine (in DNA) = 2 pyrimidine residues (in DNA).. Involved in repair of UV radiation-induced DNA damage. Catalyzes the light-dependent monomerization (300-600 nm) of cyclobutyl pyrimidine dimers (in cis-syn configuration), which are formed between adjacent bases on the same DNA strand upon exposure to ultraviolet radiation. In Thermus thermophilus (strain ATCC 27634 / DSM 579 / HB8), this protein is Deoxyribodipyrimidine photo-lyase (phr).